A 156-amino-acid chain; its full sequence is Endoribonuclease YbeY (156 aa).

Residues histidine 117, histidine 121, and histidine 127 each contribute to the Zn(2+) site.

This sequence belongs to the endoribonuclease YbeY family. Zn(2+) is required as a cofactor.

The protein localises to the cytoplasm. Its function is as follows. Single strand-specific metallo-endoribonuclease involved in late-stage 70S ribosome quality control and in maturation of the 3' terminus of the 16S rRNA. The sequence is that of Endoribonuclease YbeY from Shewanella halifaxensis (strain HAW-EB4).